The sequence spans 507 residues: ATP synthase subunit alpha, chloroplastic (507 aa).

An ATP-binding site is contributed by 170 to 177 (GDRQTGKT).

It belongs to the ATPase alpha/beta chains family. In terms of assembly, F-type ATPases have 2 components, CF(1) - the catalytic core - and CF(0) - the membrane proton channel. CF(1) has five subunits: alpha(3), beta(3), gamma(1), delta(1), epsilon(1). CF(0) has four main subunits: a, b, b' and c.

The protein resides in the plastid. It localises to the chloroplast thylakoid membrane. It carries out the reaction ATP + H2O + 4 H(+)(in) = ADP + phosphate + 5 H(+)(out). Functionally, produces ATP from ADP in the presence of a proton gradient across the membrane. The alpha chain is a regulatory subunit. The sequence is that of ATP synthase subunit alpha, chloroplastic from Drimys granadensis.